The sequence spans 645 residues: UPF0313 protein CLK_3381 (645 aa).

In terms of domain architecture, Radical SAM core spans 295 to 566; sequence AIKEVKFSIT…RMQRALLQFS (272 aa). Positions 309, 313, and 316 each coordinate [4Fe-4S] cluster. The tract at residues 598–645 is disordered; it reads NKPYKKSHKKNNVKNNNNHYNKNNNYNKNKDVSKKNKKNSLSKHKKRK. Basic residues predominate over residues 600 to 609; it reads PYKKSHKKNN. Over residues 610 to 624 the composition is skewed to low complexity; it reads VKNNNNHYNKNNNYN. Residues 632–645 are compositionally biased toward basic residues; that stretch reads KNKKNSLSKHKKRK.

It belongs to the UPF0313 family. The cofactor is [4Fe-4S] cluster.

This Clostridium botulinum (strain Loch Maree / Type A3) protein is UPF0313 protein CLK_3381.